A 162-amino-acid polypeptide reads, in one-letter code: MERIKRFLKSFLLFELLKGMKVTGRYLFAPKVTVHYPEEKTPQSPRFRGLHALRRYPNGEERCIACKLCEAVCPALAITIESEQRDDGTRRTTRYDIDLIKCIFCGFCEEACPVDAIVETRVLEYHGEVRGDLTYTKEMLLAVGDRYEEQIAKDRAADAPYR.

4Fe-4S ferredoxin-type domains follow at residues 53–83 (LRRYPNGEERCIACKLCEAVCPALAITIESE) and 93–122 (TRYDIDLIKCIFCGFCEEACPVDAIVETRV). [4Fe-4S] cluster contacts are provided by C63, C66, C69, C73, C102, C105, C108, and C112.

It belongs to the complex I 23 kDa subunit family. In terms of assembly, NDH-1 is composed of 14 different subunits. Subunits NuoA, H, J, K, L, M, N constitute the membrane sector of the complex. [4Fe-4S] cluster serves as cofactor.

The protein localises to the cell inner membrane. The enzyme catalyses a quinone + NADH + 5 H(+)(in) = a quinol + NAD(+) + 4 H(+)(out). In terms of biological role, NDH-1 shuttles electrons from NADH, via FMN and iron-sulfur (Fe-S) centers, to quinones in the respiratory chain. The immediate electron acceptor for the enzyme in this species is believed to be ubiquinone. Couples the redox reaction to proton translocation (for every two electrons transferred, four hydrogen ions are translocated across the cytoplasmic membrane), and thus conserves the redox energy in a proton gradient. The polypeptide is NADH-quinone oxidoreductase subunit I (Nitrosomonas eutropha (strain DSM 101675 / C91 / Nm57)).